A 62-amino-acid polypeptide reads, in one-letter code: Photosystem II reaction center protein Z (62 aa).

Helical transmembrane passes span A8–A28 and F41–V61.

This sequence belongs to the PsbZ family. PSII is composed of 1 copy each of membrane proteins PsbA, PsbB, PsbC, PsbD, PsbE, PsbF, PsbH, PsbI, PsbJ, PsbK, PsbL, PsbM, PsbT, PsbX, PsbY, PsbZ, Psb30/Ycf12, peripheral proteins PsbO, CyanoQ (PsbQ), PsbU, PsbV and a large number of cofactors. It forms dimeric complexes.

Its subcellular location is the cellular thylakoid membrane. Functionally, may control the interaction of photosystem II (PSII) cores with the light-harvesting antenna, regulates electron flow through the 2 photosystem reaction centers. PSII is a light-driven water plastoquinone oxidoreductase, using light energy to abstract electrons from H(2)O, generating a proton gradient subsequently used for ATP formation. The protein is Photosystem II reaction center protein Z of Cyanothece sp. (strain PCC 7425 / ATCC 29141).